Here is a 133-residue protein sequence, read N- to C-terminus: Small ribosomal subunit protein uS8 (133 aa).

This sequence belongs to the universal ribosomal protein uS8 family. Part of the 30S ribosomal subunit. Contacts proteins S5 and S12.

Functionally, one of the primary rRNA binding proteins, it binds directly to 16S rRNA central domain where it helps coordinate assembly of the platform of the 30S subunit. This Synechococcus sp. (strain WH7803) protein is Small ribosomal subunit protein uS8.